The following is a 136-amino-acid chain: Small ribosomal subunit protein uS9 (136 aa).

It belongs to the universal ribosomal protein uS9 family.

This is Small ribosomal subunit protein uS9 from Borrelia recurrentis (strain A1).